The sequence spans 220 residues: Protein-L-isoaspartate O-methyltransferase (220 aa).

The active site involves Ser65.

It belongs to the methyltransferase superfamily. L-isoaspartyl/D-aspartyl protein methyltransferase family.

It is found in the cytoplasm. It carries out the reaction [protein]-L-isoaspartate + S-adenosyl-L-methionine = [protein]-L-isoaspartate alpha-methyl ester + S-adenosyl-L-homocysteine. Functionally, catalyzes the methyl esterification of L-isoaspartyl residues in peptides and proteins that result from spontaneous decomposition of normal L-aspartyl and L-asparaginyl residues. It plays a role in the repair and/or degradation of damaged proteins. The chain is Protein-L-isoaspartate O-methyltransferase (pcm) from Pyrococcus horikoshii (strain ATCC 700860 / DSM 12428 / JCM 9974 / NBRC 100139 / OT-3).